A 948-amino-acid polypeptide reads, in one-letter code: Phosphatidylinositol-glycan-specific phospholipase D (948 aa).

A signal peptide spans 1–24 (MKNKIILLWLLLIVILCTISNVKG). 8 N-linked (GlcNAc...) asparagine glycosylation sites follow: N39, N78, N148, N300, N433, N452, N506, and N535. 4 FG-GAP repeats span residues 451–512 (TNFT…SVTI), 526–588 (QVAT…NPAG), 596–656 (LPSI…RISG), and 663–724 (DADY…LNSF). N749 and N788 each carry an N-linked (GlcNAc...) asparagine glycan. FG-GAP repeat units follow at residues 799 to 861 (NLLL…LTND) and 895 to 948 (SSGG…NIFQ).

This sequence belongs to the GPLD1 family. It depends on Ca(2+) as a cofactor.

The protein localises to the secreted. It catalyses the reaction a 6-(alpha-D-glucosaminyl)-1-(1,2-diacyl-sn-glycero-3-phospho)-1D-myo-inositol + H2O = 6-(alpha-D-glucosaminyl)-1D-myo-inositol + a 1,2-diacyl-sn-glycero-3-phosphate + H(+). Its function is as follows. Hydrolyzes the inositol phosphate linkage in proteins anchored by phosphatidylinositol glycans (GPI-anchor) thus releasing these proteins from the membrane. May also cleave GPI anchor intermediates intracellularly. The sequence is that of Phosphatidylinositol-glycan-specific phospholipase D (pldG) from Dictyostelium discoideum (Social amoeba).